Here is a 228-residue protein sequence, read N- to C-terminus: MATWNNLNLQNGASPLMEQIIFFHDHTLIILIMITILVGYLMINLFFNKYINRFLLEGQMIELIWTILPAITLIFIALPSLRLLYLLDELNNPLITLKSIGHQWYWSYEYSDFNNIQFDSYMIPSKEMKFNEFRLLDVDNRIILPMNNQIRIMVTATDVIHSWTVPSLGVKIDANPGRLNQTNFFINRPGLFYGQCSEICGANHSFMPIVIESISINNFIKWINNYSS.

Topologically, residues 1–26 are mitochondrial intermembrane; sequence MATWNNLNLQNGASPLMEQIIFFHDH. The chain crosses the membrane as a helical span at residues 27 to 48; that stretch reads TLIILIMITILVGYLMINLFFN. Topologically, residues 49 to 62 are mitochondrial matrix; sequence KYINRFLLEGQMIE. The helical transmembrane segment at 63–82 threads the bilayer; that stretch reads LIWTILPAITLIFIALPSLR. Residues 83 to 228 are Mitochondrial intermembrane-facing; that stretch reads LLYLLDELNN…FIKWINNYSS (146 aa). Cu cation-binding residues include His161, Cys196, Glu198, Cys200, His204, and Met207. Glu198 contributes to the Mg(2+) binding site.

It belongs to the cytochrome c oxidase subunit 2 family. Component of the cytochrome c oxidase (complex IV, CIV), a multisubunit enzyme composed of a catalytic core of 3 subunits and several supernumerary subunits. The complex exists as a monomer or a dimer and forms supercomplexes (SCs) in the inner mitochondrial membrane with ubiquinol-cytochrome c oxidoreductase (cytochrome b-c1 complex, complex III, CIII). Cu cation serves as cofactor.

It localises to the mitochondrion inner membrane. The catalysed reaction is 4 Fe(II)-[cytochrome c] + O2 + 8 H(+)(in) = 4 Fe(III)-[cytochrome c] + 2 H2O + 4 H(+)(out). Component of the cytochrome c oxidase, the last enzyme in the mitochondrial electron transport chain which drives oxidative phosphorylation. The respiratory chain contains 3 multisubunit complexes succinate dehydrogenase (complex II, CII), ubiquinol-cytochrome c oxidoreductase (cytochrome b-c1 complex, complex III, CIII) and cytochrome c oxidase (complex IV, CIV), that cooperate to transfer electrons derived from NADH and succinate to molecular oxygen, creating an electrochemical gradient over the inner membrane that drives transmembrane transport and the ATP synthase. Cytochrome c oxidase is the component of the respiratory chain that catalyzes the reduction of oxygen to water. Electrons originating from reduced cytochrome c in the intermembrane space (IMS) are transferred via the dinuclear copper A center (CU(A)) of subunit 2 and heme A of subunit 1 to the active site in subunit 1, a binuclear center (BNC) formed by heme A3 and copper B (CU(B)). The BNC reduces molecular oxygen to 2 water molecules using 4 electrons from cytochrome c in the IMS and 4 protons from the mitochondrial matrix. This Yponomeuta malinellus (European small ermine moth) protein is Cytochrome c oxidase subunit 2 (COII).